Consider the following 175-residue polypeptide: Ribosome maturation factor RimM (175 aa).

The region spanning 96 to 175 is the PRC barrel domain; it reads EEDYYWHDLI…TITVDWDAGF (80 aa).

This sequence belongs to the RimM family. Binds ribosomal protein uS19.

It is found in the cytoplasm. Its function is as follows. An accessory protein needed during the final step in the assembly of 30S ribosomal subunit, possibly for assembly of the head region. Essential for efficient processing of 16S rRNA. May be needed both before and after RbfA during the maturation of 16S rRNA. It has affinity for free ribosomal 30S subunits but not for 70S ribosomes. This Haemophilus ducreyi (strain 35000HP / ATCC 700724) protein is Ribosome maturation factor RimM.